Consider the following 100-residue polypeptide: Large ribosomal subunit protein bL28 (100 aa).

This sequence belongs to the bacterial ribosomal protein bL28 family.

This chain is Large ribosomal subunit protein bL28, found in Ehrlichia chaffeensis (strain ATCC CRL-10679 / Arkansas).